The primary structure comprises 214 residues: Ribosomal RNA small subunit methyltransferase G (214 aa).

S-adenosyl-L-methionine is bound by residues glycine 81, methionine 86, 132 to 133 (VE), and arginine 147.

Belongs to the methyltransferase superfamily. RNA methyltransferase RsmG family.

It localises to the cytoplasm. The catalysed reaction is guanosine(527) in 16S rRNA + S-adenosyl-L-methionine = N(7)-methylguanosine(527) in 16S rRNA + S-adenosyl-L-homocysteine. Its function is as follows. Specifically methylates the N7 position of guanine in position 527 of 16S rRNA. The polypeptide is Ribosomal RNA small subunit methyltransferase G (Pseudomonas paraeruginosa (strain DSM 24068 / PA7) (Pseudomonas aeruginosa (strain PA7))).